Consider the following 171-residue polypeptide: Shikimate kinase (171 aa).

An ATP-binding site is contributed by 14-19; it reads GAGKST. Residue Ser-18 participates in Mg(2+) binding. Substrate contacts are provided by Asp-36, Arg-60, and Gly-82. ATP is bound at residue Arg-120. Arg-139 contributes to the substrate binding site. Position 156 (Gln-156) interacts with ATP.

The protein belongs to the shikimate kinase family. In terms of assembly, monomer. Requires Mg(2+) as cofactor.

It is found in the cytoplasm. The enzyme catalyses shikimate + ATP = 3-phosphoshikimate + ADP + H(+). It functions in the pathway metabolic intermediate biosynthesis; chorismate biosynthesis; chorismate from D-erythrose 4-phosphate and phosphoenolpyruvate: step 5/7. Its function is as follows. Catalyzes the specific phosphorylation of the 3-hydroxyl group of shikimic acid using ATP as a cosubstrate. The polypeptide is Shikimate kinase (Pseudoalteromonas atlantica (strain T6c / ATCC BAA-1087)).